Consider the following 582-residue polypeptide: DnaJ protein ERDJ3A (582 aa).

A signal peptide spans 1–25 (MGIPVRSLLVASIVLSSIALHVAAA). Residues 29–93 (DPYKVLGVDK…EKRKNYDLYG (65 aa)) enclose the J domain. Asn-61 is a glycosylation site (N-linked (GlcNAc...) asparagine). A disordered region spans residues 178-201 (GGSQHTGSAGKARRGTKSSGHDSS). Positions 407–437 (VKDLRSGIKELKNLLENFEKKNKKLASNQAK) form a coiled coil.

In terms of assembly, interacts with BIP5.

Its subcellular location is the endoplasmic reticulum. The protein resides in the vacuole. Its function is as follows. May play a role in protein folding in the endoplasmic reticulum. The polypeptide is DnaJ protein ERDJ3A (Oryza sativa subsp. japonica (Rice)).